The following is a 391-amino-acid chain: ATP-sensitive inward rectifier potassium channel 1 (391 aa).

Residues 1 to 77 are Cytoplasmic-facing; sequence MGASERSVFR…IWTTVLDLKW (77 aa). Phosphoserine; by SGK1 is present on serine 44. Residues 78 to 102 form a helical membrane-spanning segment; sequence RYKMTVFITAFLGSWFLFGLLWYVV. The Extracellular portion of the chain corresponds to 103-127; it reads AYVHKDLPEFYPPDNRTPCVENING. N-linked (GlcNAc...) asparagine glycosylation occurs at asparagine 117. An intramembrane region (helical; Pore-forming) is located at residues 128 to 139; the sequence is MTSAFLFSLETQ. An intramembrane region (pore-forming) is located at residues 140–146; it reads VTIGYGF. The Selectivity filter signature appears at 141-146; that stretch reads TIGYGF. Topologically, residues 147 to 155 are extracellular; that stretch reads RFVTEQCAT. Residues 156–177 form a helical membrane-spanning segment; it reads AIFLLIFQSILGVIINSFMCGA. Residues 178 to 391 lie on the Cytoplasmic side of the membrane; it reads ILAKISRPKK…EVDETDDTQM (214 aa). The polyphosphoinositide (PIP2)-binding stretch occupies residues 180-207; that stretch reads AKISRPKKRAKTITFSKNAVISKRGGKL. 223–230 is an ATP binding site; it reads GSHIYGKL.

Belongs to the inward rectifier-type potassium channel (TC 1.A.2.1) family. KCNJ1 subfamily. Interacts with SGK1 and SLC9A3R2/NHERF2. Phosphorylation at Ser-44 by SGK1 is necessary for its expression at the cell membrane. As to expression, mainly in kidney (renal cortex, medulla and papilla). Kidney.

It localises to the cell membrane. The catalysed reaction is K(+)(in) = K(+)(out). Its activity is regulated as follows. Inhibited by WNK3. Activated by phosphatidylinositol 4,5 biphosphate (PtdIns(4,5)P2). Functionally, inward rectifier potassium channels are characterized by a greater tendency to allow potassium to flow into the cell rather than out of it. Their voltage dependence is regulated by the concentration of extracellular potassium; as external potassium is raised, the voltage range of the channel opening shifts to more positive voltages. The inward rectification is mainly due to the blockage of outward current by internal magnesium. This channel is activated by internal ATP and can be blocked by external barium. In the kidney, probably plays a major role in potassium homeostasis. Its function is as follows. Inward rectifier potassium channels are characterized by a greater tendency to allow potassium to flow into the cell rather than out of it. Their voltage dependence is regulated by the concentration of extracellular potassium; as external potassium is raised, the voltage range of the channel opening shifts to more positive voltages. The sequence is that of ATP-sensitive inward rectifier potassium channel 1 (Kcnj1) from Rattus norvegicus (Rat).